A 678-amino-acid chain; its full sequence is Penicillin-binding protein activator LpoA (678 aa).

The first 26 residues, 1–26, serve as a signal peptide directing secretion; the sequence is MVPSTFSRLKAARCLPVVLAALIFAG. Residue Cys-27 is the site of N-palmitoyl cysteine attachment. Cys-27 carries S-diacylglycerol cysteine lipidation. Composition is skewed to low complexity over residues 300 to 310, 330 to 340, and 513 to 528; these read AADVAEQPQPQ, QPAAQPVPVSA, and TTNNPTLQTTPTDDQF. Disordered stretches follow at residues 300–340 and 496–528; these read AADV…PVSA and ALTGSPITPRATTDSGMTTNNPTLQTTPTDDQF.

This sequence belongs to the LpoA family. In terms of assembly, interacts with PBP1a.

It localises to the cell outer membrane. Its function is as follows. Regulator of peptidoglycan synthesis that is essential for the function of penicillin-binding protein 1A (PBP1a). The protein is Penicillin-binding protein activator LpoA of Shigella flexneri serotype 5b (strain 8401).